The following is a 95-amino-acid chain: Co-chaperonin GroES (95 aa).

The protein belongs to the GroES chaperonin family. As to quaternary structure, heptamer of 7 subunits arranged in a ring. Interacts with the chaperonin GroEL.

It localises to the cytoplasm. Together with the chaperonin GroEL, plays an essential role in assisting protein folding. The GroEL-GroES system forms a nano-cage that allows encapsulation of the non-native substrate proteins and provides a physical environment optimized to promote and accelerate protein folding. GroES binds to the apical surface of the GroEL ring, thereby capping the opening of the GroEL channel. This is Co-chaperonin GroES from Chlorobium phaeobacteroides (strain BS1).